A 151-amino-acid polypeptide reads, in one-letter code: Large ribosomal subunit protein uL13 (151 aa).

This sequence belongs to the universal ribosomal protein uL13 family. Part of the 50S ribosomal subunit.

Functionally, this protein is one of the early assembly proteins of the 50S ribosomal subunit, although it is not seen to bind rRNA by itself. It is important during the early stages of 50S assembly. The protein is Large ribosomal subunit protein uL13 of Synechocystis sp. (strain ATCC 27184 / PCC 6803 / Kazusa).